The chain runs to 478 residues: Pentraxin-4 (478 aa).

A signal peptide spans 1 to 25 (MGCSWRKTLSFFLVFVPIYLHGASS). Residues N67 and N91 are each glycosylated (N-linked (GlcNAc...) asparagine). Positions 208–222 (RDRQELRAASEHRGP) are enriched in basic and acidic residues. Residues 208 to 262 (RDRQELRAASEHRGPPQDSSAPLQGRREPPASGSHRVLSGTAPKDPRQQAWSPQV) are disordered. In terms of domain architecture, Pentraxin (PTX) spans 269–473 (VGPTLVFPNA…GFVQGANCTC (205 aa)). An intrachain disulfide couples C300 to C364. Ca(2+)-binding residues include D322, N323, E406, Q407, and D408.

Requires Ca(2+) as cofactor. As to expression, widely expressed at low levels with highest levels in small intestine, testis and brain. Very low expression in endothelial cells, monocytes, neutrophils and lymphocytes. Isoform 1 is not expressed in small intestine.

The protein resides in the secreted. The polypeptide is Pentraxin-4 (PTX4) (Homo sapiens (Human)).